Here is a 223-residue protein sequence, read N- to C-terminus: Golgi SNAP receptor complex member 1-1 (223 aa).

Residues 1 to 201 (MDVPSSWDAL…AAIKRKKSMD (201 aa)) are Cytoplasmic-facing. Positions 8 to 67 (DALRKQARKIEAQLDEQMHSYRRLVSTKALSKSDGNESDLEAGIDLLLRQLQQVNAQMQA) form a coiled coil. The chain crosses the membrane as a helical; Anchor for type IV membrane protein span at residues 202–222 (TIILSLVAAVCTFLIFIYWIT). A topological domain (vesicular) is located at residue lysine 223.

Belongs to the GOSR1 family. As to quaternary structure, component of several multiprotein Golgi SNARE complexes.

The protein resides in the golgi apparatus membrane. Involved in transport from the ER to the Golgi apparatus as well as in intra-Golgi transport. It belongs to a super-family of proteins called t-SNAREs or soluble NSF (N-ethylmaleimide-sensitive factor) attachment protein receptor. The protein is Golgi SNAP receptor complex member 1-1 (GOS11) of Arabidopsis thaliana (Mouse-ear cress).